A 286-amino-acid polypeptide reads, in one-letter code: MASSNATNSTSAASAANTNSSAFKSAELAALSGVEAAKRAAAYAAVDNHVKPQHEIIGIGSGSTVPYVVERIAQQGPAVNAKRWFVPTGFQSRELIINAGLRLGDVDSFPSIDVTIDGADEVDNALNCIKGGGACHLREKVLAEAANEFVVVADYRKNGSQLGTKWLQGVPIEVAPFAYAKVLQNLKKMGSDKAVLRMGKAKAGPVVTDNGNFCIDAPFPEAQMKDPSDLLKRIKLLTGVLEVGLFCNICKSAYFGNDDGTITIKTAAGDVQEGVHFDVSKAPATA.

This sequence belongs to the ribose 5-phosphate isomerase family.

It localises to the cytoplasm. The enzyme catalyses aldehydo-D-ribose 5-phosphate = D-ribulose 5-phosphate. It functions in the pathway carbohydrate degradation; pentose phosphate pathway; D-ribose 5-phosphate from D-ribulose 5-phosphate (non-oxidative stage): step 1/1. The chain is Ribose-5-phosphate isomerase (RKI1) from Mycosarcoma maydis (Corn smut fungus).